A 454-amino-acid chain; its full sequence is UDP-N-acetylmuramoylalanine--D-glutamate ligase (454 aa).

117–123 provides a ligand contact to ATP; that stretch reads GTNGKTT.

This sequence belongs to the MurCDEF family.

Its subcellular location is the cytoplasm. The enzyme catalyses UDP-N-acetyl-alpha-D-muramoyl-L-alanine + D-glutamate + ATP = UDP-N-acetyl-alpha-D-muramoyl-L-alanyl-D-glutamate + ADP + phosphate + H(+). It participates in cell wall biogenesis; peptidoglycan biosynthesis. Functionally, cell wall formation. Catalyzes the addition of glutamate to the nucleotide precursor UDP-N-acetylmuramoyl-L-alanine (UMA). The protein is UDP-N-acetylmuramoylalanine--D-glutamate ligase of Alkaliphilus oremlandii (strain OhILAs) (Clostridium oremlandii (strain OhILAs)).